The following is a 728-amino-acid chain: 1,4-alpha-glucan branching enzyme GlgB (728 aa).

Asp-405 functions as the Nucleophile in the catalytic mechanism. Catalysis depends on Glu-458, which acts as the Proton donor.

This sequence belongs to the glycosyl hydrolase 13 family. GlgB subfamily. In terms of assembly, monomer.

It carries out the reaction Transfers a segment of a (1-&gt;4)-alpha-D-glucan chain to a primary hydroxy group in a similar glucan chain.. The protein operates within glycan biosynthesis; glycogen biosynthesis. Functionally, catalyzes the formation of the alpha-1,6-glucosidic linkages in glycogen by scission of a 1,4-alpha-linked oligosaccharide from growing alpha-1,4-glucan chains and the subsequent attachment of the oligosaccharide to the alpha-1,6 position. The polypeptide is 1,4-alpha-glucan branching enzyme GlgB (Salmonella arizonae (strain ATCC BAA-731 / CDC346-86 / RSK2980)).